We begin with the raw amino-acid sequence, 887 residues long: Protein PTHB1 (887 aa).

A seven-bladed beta-propeller region spans residues 1 to 407 (MSLFKARDWW…SQGVWPMTER (407 aa)). The segment at 685 to 765 (KDKTPAPLQH…FLPLQEDTQE (81 aa)) is interaction with LZTL1. Residues 850 to 887 (DLEERSVEQDSTELFTNHRHLTAETPRPEVSPLQGVSE) are disordered.

Part of BBSome complex, that contains BBS1, BBS2, BBS4, BBS5, BBS7, BBS8/TTC8, BBS9 and BBIP10. Interacts with LZTL1; the interaction mediates the association of LZTL1 with the BBsome complex and regulates BBSome ciliary trafficking. As to expression, widely expressed. Expressed in adult heart, skeletal muscle, lung, liver, kidney, placenta and brain, and in fetal kidney, lung, liver and brain.

The protein localises to the cytoplasm. It is found in the cytoskeleton. The protein resides in the microtubule organizing center. It localises to the centrosome. Its subcellular location is the cell projection. The protein localises to the cilium membrane. It is found in the centriolar satellite. In terms of biological role, the BBSome complex is thought to function as a coat complex required for sorting of specific membrane proteins to the primary cilia. The BBSome complex is required for ciliogenesis but is dispensable for centriolar satellite function. This ciliogenic function is mediated in part by the Rab8 GDP/GTP exchange factor, which localizes to the basal body and contacts the BBSome. Rab8(GTP) enters the primary cilium and promotes extension of the ciliary membrane. Firstly the BBSome associates with the ciliary membrane and binds to RAB3IP/Rabin8, the guanosyl exchange factor (GEF) for Rab8 and then the Rab8-GTP localizes to the cilium and promotes docking and fusion of carrier vesicles to the base of the ciliary membrane. Required for proper BBSome complex assembly and its ciliary localization. The sequence is that of Protein PTHB1 (BBS9) from Homo sapiens (Human).